The following is a 368-amino-acid chain: Core histone macro-H2A.1 (368 aa).

Residues 2-117 form the Histone H2A domain; that stretch reads SSRGGKKKST…NIHPELLAKK (116 aa). N6-lactoyllysine; alternate is present on residues Lys-7 and Lys-9. Lys-18 carries the post-translational modification N6-methyllysine. Lys-116 carries the N6-acetyllysine; alternate modification. Lys-116 participates in a covalent cross-link: Glycyl lysine isopeptide (Lys-Gly) (interchain with G-Cter in ubiquitin); alternate. Lys-117 participates in a covalent cross-link: Glycyl lysine isopeptide (Lys-Gly) (interchain with G-Cter in ubiquitin). Lys-123 bears the N6-acetyllysine; alternate mark. Residue Lys-123 is modified to N6,N6-dimethyllysine; alternate. Lys-123 is covalently cross-linked (Glycyl lysine isopeptide (Lys-Gly) (interchain with G-Cter in SUMO2); alternate). Residues 128–179 form a disordered region; the sequence is ITPPPAKKAKSPSQKKPVAKKTGGKKGARKSKKQGEVSKAASADSTTEGAPT. At Thr-129 the chain carries Phosphothreonine. A compositionally biased stretch (basic residues) spans 144–159; that stretch reads PVAKKTGGKKGARKSK. Residue Lys-166 forms a Glycyl lysine isopeptide (Lys-Gly) (interchain with G-Cter in SUMO2) linkage. Phosphoserine is present on residues Ser-169 and Ser-172. The Macro domain maps to 183–366; sequence TVLSTKSLFL…IYVQEMAKLD (184 aa). Residue Lys-188 forms a Glycyl lysine isopeptide (Lys-Gly) (interchain with G-Cter in SUMO2) linkage. A glycoprotein contacts are provided by Asp-202, Ile-203, Val-225, Ser-274, Gly-311, Ser-312, Gly-313, and Asn-315. Residue Lys-319 forms a Glycyl lysine isopeptide (Lys-Gly) (interchain with G-Cter in SUMO2) linkage.

This sequence belongs to the histone H2A family. The nucleosome is a histone octamer containing two molecules each of H2A, H2B, H3 and H4 assembled in one H3-H4 heterotetramer and two H2A-H2B heterodimers. Interacts with HDAC1 and HDAC2. Interacts with SPOP. Part of a complex consisting of MACROH2A1, CUL3 and SPOP. As to quaternary structure, interacts with PARP1. Monoubiquitinated at either Lys-116 or Lys-117. May also be polyubiquitinated. Ubiquitination is mediated by the CUL3/SPOP E3 complex and does not promote proteasomal degradation. Instead, it is required for enrichment in inactive X chromosome chromatin. As to expression, present only in liver and brain (at protein level). Present in brain, thymus, testis, liver and kidney (at protein level).

The protein resides in the nucleus. The protein localises to the chromosome. In terms of biological role, variant histone H2A which replaces conventional H2A in a subset of nucleosomes where it represses transcription. Nucleosomes wrap and compact DNA into chromatin, limiting DNA accessibility to the cellular machineries which require DNA as a template. Histones thereby play a central role in transcription regulation, DNA repair, DNA replication and chromosomal stability. DNA accessibility is regulated via a complex set of post-translational modifications of histones, also called histone code, and nucleosome remodeling. Involved in stable X chromosome inactivation. Inhibits the binding of transcription factors, including NF-kappa-B, and interferes with the activity of remodeling SWI/SNF complexes. Inhibits histone acetylation by EP300 and recruits class I HDACs, which induces a hypoacetylated state of chromatin. Functionally, isoform that specifically binds poly-ADP-ribose and O-acetyl-ADP-ribose and plays a key role in NAD(+) metabolism. Able to bind to the ends of poly-ADP-ribose chains created by PARP1 and cap them. This prevents PARP1 from further addition of ADP-ribose and thus limits the consumption of nuclear NAD(+), allowing the cell to maintain proper NAD(+) levels in both the nucleus and the mitochondria to promote proper mitochondrial respiration. Increases the expression of genes involved in redox metabolism, including SOD3. Its function is as follows. In contrast to isoform 1, does not bind poly-ADP-ribose. Represses SOD3 gene expression. This Rattus norvegicus (Rat) protein is Core histone macro-H2A.1.